Reading from the N-terminus, the 209-residue chain is Large ribosomal subunit protein uL3 (209 aa).

Belongs to the universal ribosomal protein uL3 family. As to quaternary structure, part of the 50S ribosomal subunit. Forms a cluster with proteins L14 and L19.

Its function is as follows. One of the primary rRNA binding proteins, it binds directly near the 3'-end of the 23S rRNA, where it nucleates assembly of the 50S subunit. This is Large ribosomal subunit protein uL3 from Clostridium botulinum (strain Okra / Type B1).